A 716-amino-acid chain; its full sequence is Fatty acid oxidation complex subunit alpha (716 aa).

The segment at 1–189 (MIYQSPTIQV…KVGAVDAVVA (189 aa)) is enoyl-CoA hydratase/isomerase. Asp296 provides a ligand contact to substrate. Positions 311-716 (KDVKSAAVLG…AANNGSYYQA (406 aa)) are 3-hydroxyacyl-CoA dehydrogenase. NAD(+) is bound by residues Met324, Asp343, 400 to 402 (VVE), Lys407, and Ser429. His450 serves as the catalytic For 3-hydroxyacyl-CoA dehydrogenase activity. Asn453 is an NAD(+) binding site. Substrate contacts are provided by Asn500 and Tyr660.

This sequence in the N-terminal section; belongs to the enoyl-CoA hydratase/isomerase family. It in the C-terminal section; belongs to the 3-hydroxyacyl-CoA dehydrogenase family. As to quaternary structure, heterotetramer of two alpha chains (FadB) and two beta chains (FadA).

The catalysed reaction is a (3S)-3-hydroxyacyl-CoA + NAD(+) = a 3-oxoacyl-CoA + NADH + H(+). It carries out the reaction a (3S)-3-hydroxyacyl-CoA = a (2E)-enoyl-CoA + H2O. The enzyme catalyses a 4-saturated-(3S)-3-hydroxyacyl-CoA = a (3E)-enoyl-CoA + H2O. It catalyses the reaction (3S)-3-hydroxybutanoyl-CoA = (3R)-3-hydroxybutanoyl-CoA. The catalysed reaction is a (3Z)-enoyl-CoA = a 4-saturated (2E)-enoyl-CoA. It carries out the reaction a (3E)-enoyl-CoA = a 4-saturated (2E)-enoyl-CoA. It functions in the pathway lipid metabolism; fatty acid beta-oxidation. Its function is as follows. Involved in the aerobic and anaerobic degradation of long-chain fatty acids via beta-oxidation cycle. Catalyzes the formation of 3-oxoacyl-CoA from enoyl-CoA via L-3-hydroxyacyl-CoA. It can also use D-3-hydroxyacyl-CoA and cis-3-enoyl-CoA as substrate. This is Fatty acid oxidation complex subunit alpha from Shewanella sp. (strain ANA-3).